A 562-amino-acid chain; its full sequence is MKAQLRALIGQGIEALRANGTLPADTLPPDFVVERPKTREHGDFATNAAMLLAKAARSNPRALAQALLAALPASDDVARVEIAGPGFINFHLTPAAYQREVIHVIKQGHDYGRGLAGNGRSVGVEYVSANPTGPLHVGHGRAAAIGDSLARVLDANGWNVKREFYYNDAGVQIENLALSVQARAQGLTPDSAGWPENGYRGDYIADVAKAYLAGDTVDLEGHLVTGTKDPADLESIRRFAVAYLRNEQNHDLAAFRVDFDIYFLESSLYKDGKVDEAVQKLIASGHTYEEGGALWLKSTDFGDDKDRVMRKSDGTYTYFVPDVAYHLTKWQRGYERAITELGADHHGSLTRVRAGLQAMELGIPQGWPEYVLHQMVTVMRGGEEVKLSKRAGSYVTLRDLIEETSADAVRWFLIARKPDSQLTFDIDLARAQSNDNPVFYVQYAHARVCSVLRQAQEKGLKYDQTHGMAELARLDDEHSLALMLELSRYAEVVELAGQTLEPYQIAQYLRELAHAFHTWYHNSKVLVDDAAERDAKLTLAVATQQVLANGLELLGVSAPEKM.

Residues 129 to 139 carry the 'HIGH' region motif; the sequence is ANPTGPLHVGH.

The protein belongs to the class-I aminoacyl-tRNA synthetase family. In terms of assembly, monomer.

The protein localises to the cytoplasm. The catalysed reaction is tRNA(Arg) + L-arginine + ATP = L-arginyl-tRNA(Arg) + AMP + diphosphate. This chain is Arginine--tRNA ligase, found in Xanthomonas campestris pv. campestris (strain B100).